The following is a 307-amino-acid chain: Small ribosomal subunit biogenesis GTPase RsgA (307 aa).

Residues 1–20 (MPSEHPFSDGISTPNPKETM) are disordered. Over residues 10 to 20 (GISTPNPKETM) the composition is skewed to polar residues. The region spanning 85–242 (RQDAWKTKLI…LIDSPGLQEF (158 aa)) is the CP-type G domain. GTP contacts are provided by residues 135 to 138 (NKAD) and 184 to 192 (GQSGMGKST). Residues cysteine 266, cysteine 271, histidine 273, and cysteine 279 each contribute to the Zn(2+) site.

The protein belongs to the TRAFAC class YlqF/YawG GTPase family. RsgA subfamily. As to quaternary structure, monomer. Associates with 30S ribosomal subunit, binds 16S rRNA. It depends on Zn(2+) as a cofactor.

The protein resides in the cytoplasm. In terms of biological role, one of several proteins that assist in the late maturation steps of the functional core of the 30S ribosomal subunit. Helps release RbfA from mature subunits. May play a role in the assembly of ribosomal proteins into the subunit. Circularly permuted GTPase that catalyzes slow GTP hydrolysis, GTPase activity is stimulated by the 30S ribosomal subunit. This chain is Small ribosomal subunit biogenesis GTPase RsgA, found in Neisseria meningitidis serogroup A / serotype 4A (strain DSM 15465 / Z2491).